Reading from the N-terminus, the 287-residue chain is MGQCLGLVQIDQSTVAIKENFGKFSEVLEPGCHFLPWCIGQQIAGYLSLRVKQLDVRCETKTKDNVFVTVVASVQYRALADKASDAFYKLSNTREQIQSYVFDVIRATVPKLNLDDAFEQKNDIAKAVEDELEKAMSAYGYEIVQTLIIDIEPDVHVKRAMNEINAAARLRVAANEKAEAEKILQIKKAEGEAESKYLAGVGIARQRQAIVDGLRDSVLAFSENVPGTTAKDIMDMVLVTQYFDTMKEIGASSKSTSVFIPHGPGAVKDVAAQIRDGLLQANAERND.

G2 carries N-myristoyl glycine lipidation.

Its function is as follows. Positive regulator of hypersensitive response (HR)-like cell death. May be involved in potassium ion channel regulation. This chain is Hypersensitive-induced response protein-like protein 2 (HIRL2), found in Oryza sativa subsp. japonica (Rice).